Here is a 238-residue protein sequence, read N- to C-terminus: Octanoyltransferase (238 aa).

The region spanning Ala44–Ile224 is the BPL/LPL catalytic domain. Substrate-binding positions include Arg82–His89, Ala154–Gly156, and Gly167–Ala169. The active-site Acyl-thioester intermediate is the Cys185.

This sequence belongs to the LipB family.

The protein resides in the cytoplasm. It catalyses the reaction octanoyl-[ACP] + L-lysyl-[protein] = N(6)-octanoyl-L-lysyl-[protein] + holo-[ACP] + H(+). It participates in protein modification; protein lipoylation via endogenous pathway; protein N(6)-(lipoyl)lysine from octanoyl-[acyl-carrier-protein]: step 1/2. In terms of biological role, catalyzes the transfer of endogenously produced octanoic acid from octanoyl-acyl-carrier-protein onto the lipoyl domains of lipoate-dependent enzymes. Lipoyl-ACP can also act as a substrate although octanoyl-ACP is likely to be the physiological substrate. The protein is Octanoyltransferase of Mycolicibacterium gilvum (strain PYR-GCK) (Mycobacterium gilvum (strain PYR-GCK)).